Consider the following 235-residue polypeptide: Isoprenyl transferase (235 aa).

Asp-21 is an active-site residue. Asp-21 lines the Mg(2+) pocket. Substrate is bound by residues 22-25 (GNAR), Trp-26, Lys-34, His-38, and 66-68 (SSE). Asn-69 acts as the Proton acceptor in catalysis. Substrate is bound by residues Trp-70, Arg-72, Arg-183, and 189–191 (RIS). Glu-202 is a Mg(2+) binding site.

This sequence belongs to the UPP synthase family. As to quaternary structure, homodimer. Mg(2+) serves as cofactor.

Functionally, catalyzes the condensation of isopentenyl diphosphate (IPP) with allylic pyrophosphates generating different type of terpenoids. The chain is Isoprenyl transferase from Rickettsia felis (strain ATCC VR-1525 / URRWXCal2) (Rickettsia azadi).